Consider the following 408-residue polypeptide: Multidrug resistance protein MdtG (408 aa).

A run of 11 helical transmembrane segments spans residues 16-36 (LIVA…VMPF), 58-78 (IVFS…GGLA), 92-112 (LGMG…QFLI), 115-135 (ALLG…ATQV), 146-166 (TLST…GLLA), 173-193 (PVFF…LFCI), 224-244 (LFVT…ILTL), 256-276 (VAFI…LSAP), 290-310 (ILIT…YVQT), 319-339 (FLLG…LVYN), and 378-398 (AVFL…WNSL).

Belongs to the major facilitator superfamily. DHA1 family. MdtG (TC 2.A.1.2.20) subfamily.

The protein resides in the cell inner membrane. Its function is as follows. Confers resistance to fosfomycin and deoxycholate. This Escherichia coli (strain 55989 / EAEC) protein is Multidrug resistance protein MdtG.